Here is a 418-residue protein sequence, read N- to C-terminus: Voltage-gated ClC-type chloride channel ClcB (418 aa).

10 helical membrane passes run 5–25 (LLIATVVGILAAFAVAGFRHA), 54–74 (LLTPALGGLAAGLLLMGWQKF), 146–166 (LWIACGAAAGMAAAYRAPLAG), 168–188 (LFIAEVLFGTMMLASLGPVII), 222–242 (ALIISTGVLAGLCGPLLLTLM), 258–278 (WQLALGGLIVGLLSLFTPAVW), 291–311 (APPLLMIIAGIFLCKLFAVLA), 316–336 (GAPGGVFTPTLFIGLAIGMLY), 352–372 (LLLGLTGMATLLAATTHAPIM), and 380–400 (MTGEYQLLPGLLIACVIASVI).

The protein belongs to the chloride channel (TC 2.A.49) family. ClcB subfamily.

It localises to the cell inner membrane. Its function is as follows. Probably acts as an electrical shunt for an outwardly-directed proton pump that is linked to amino acid decarboxylation, as part of the extreme acid resistance (XAR) response. The polypeptide is Voltage-gated ClC-type chloride channel ClcB (Escherichia coli O17:K52:H18 (strain UMN026 / ExPEC)).